Consider the following 453-residue polypeptide: MSIPGFGAEAQVYSETGSKGLVEVAIPEGSEWRIEVPHKTILKFKVTEGVAEIFGTELPINVELQISGTKTMVYAPIIYETFKNKTVMSNESEEIVEYLSNDSVMANYINLHLVVEAMRQQVSDNNILNPTELQSGPRVLIVGNGNSGKTSLAKLLSAYAIKSDSTPVLVNLNPRDGVFSLPGSLTATPISDSLDVESANGWGFTTTSGSLFHNPKQPIVKNYGFVDVNENLDLYKYQVSKLGVTVLSRLEEDIACRNGGVIIDTPALGIKDFTVIENIVSDFEVNLIVVLGNERLMIDLKKRFKHKSALQIVKVPKSEGLVEVDEAFIRRTQEESIKEYFNGNYKTRLSPFKTDIDVNDHTIYKCVLSSDVNSALSFLPAEPSSSNLDNSILAITQLPSTHKSGRELLNTSILGYVHVSKFDDAKGKIKVLLPFPGGFPRNMLISTNIGFNE.

Residues Glu31, Lys70, and 146–151 (NSGKTS) each bind ATP.

It belongs to the Clp1 family. Clp1 subfamily. As to quaternary structure, component of a pre-mRNA cleavage factor complex. Interacts directly with PCF11.

The protein resides in the nucleus. In terms of biological role, required for endonucleolytic cleavage during polyadenylation-dependent pre-mRNA 3'-end formation. The chain is mRNA cleavage and polyadenylation factor CLP1 from Scheffersomyces stipitis (strain ATCC 58785 / CBS 6054 / NBRC 10063 / NRRL Y-11545) (Yeast).